The chain runs to 609 residues: Pair-rule protein odd-paired (609 aa).

The segment at 20-41 is disordered; it reads RMSPNTTASNSNAQQQQQQQLE. Over residues 22–32 the composition is skewed to polar residues; it reads SPNTTASNSNA. The C2H2-type 1; atypical zinc finger occupies 210 to 249; it reads MQCLWIDPDQPGLVPPGGRKTCNKVFHSMHEIVTHLTVEH. 4 consecutive C2H2-type zinc fingers follow at residues 258–285, 291–315, 321–345, and 351–375; these read HACFWVGCSRNGRPFKAKYKLVNHIRVH, FACPHPGCGKVFARSENLKIHKRTH, FKCEHEGCDRRFANSSDRKKHSHVH, and YNCRINGCDKSYTHPSSLRKHMKVH. Disordered regions lie at residues 373–550 and 583–609; these read KVHG…ASAS and EAMNPLNHFGHHHHHHHLMHPGAATAY. The segment covering 399 to 409 has biased composition (polar residues); that stretch reads IITGGAQTPPS. Composition is skewed to low complexity over residues 414–434 and 449–498; these read GSAGSSSGVSSLSGGSGIKSS and HLGA…LTAH. Residues 528–537 show a composition bias toward basic residues; that stretch reads SHHHHPHHHQ. The span at 538–550 shows a compositional bias: low complexity; the sequence is AAPSPGAAAASAS. The segment covering 591–601 has biased composition (basic residues); the sequence is FGHHHHHHHLM.

It belongs to the GLI C2H2-type zinc-finger protein family. As to expression, expressed throughout all segment primordia; expressed ubiquitously in the ectoderm and mesoderm precursors.

Its subcellular location is the nucleus. In terms of biological role, transcription factor essential for parasegmental subdivision of the embryo. It is involved in the activation of wingless (wg) in odd parasegments. It is also required for the timely activation of wg in the remaining parasegments and for the timely activation of engrailed (en) in all parasegments. The protein is Pair-rule protein odd-paired (opa) of Drosophila melanogaster (Fruit fly).